A 429-amino-acid polypeptide reads, in one-letter code: Glutamyl-tRNA reductase (429 aa).

Substrate-binding positions include 49–52 (TCNR), S107, 112–114 (EPQ), and Q118. C50 serves as the catalytic Nucleophile. NADP(+) is bound at residue 187–192 (GAGETI).

It belongs to the glutamyl-tRNA reductase family. In terms of assembly, homodimer.

The catalysed reaction is (S)-4-amino-5-oxopentanoate + tRNA(Glu) + NADP(+) = L-glutamyl-tRNA(Glu) + NADPH + H(+). The protein operates within porphyrin-containing compound metabolism; protoporphyrin-IX biosynthesis; 5-aminolevulinate from L-glutamyl-tRNA(Glu): step 1/2. Functionally, catalyzes the NADPH-dependent reduction of glutamyl-tRNA(Glu) to glutamate 1-semialdehyde (GSA). This Pseudomonas fluorescens (strain SBW25) protein is Glutamyl-tRNA reductase.